A 1396-amino-acid polypeptide reads, in one-letter code: DNA-directed RNA polymerase subunit beta' (1396 aa).

Zn(2+)-binding residues include cysteine 70, cysteine 72, cysteine 85, and cysteine 88. Aspartate 460, aspartate 462, and aspartate 464 together coordinate Mg(2+). Residues cysteine 814, cysteine 888, cysteine 895, and cysteine 898 each contribute to the Zn(2+) site.

This sequence belongs to the RNA polymerase beta' chain family. In terms of assembly, the RNAP catalytic core consists of 2 alpha, 1 beta, 1 beta' and 1 omega subunit. When a sigma factor is associated with the core the holoenzyme is formed, which can initiate transcription. The cofactor is Mg(2+). Zn(2+) serves as cofactor.

It carries out the reaction RNA(n) + a ribonucleoside 5'-triphosphate = RNA(n+1) + diphosphate. In terms of biological role, DNA-dependent RNA polymerase catalyzes the transcription of DNA into RNA using the four ribonucleoside triphosphates as substrates. The sequence is that of DNA-directed RNA polymerase subunit beta' from Chromobacterium violaceum (strain ATCC 12472 / DSM 30191 / JCM 1249 / CCUG 213 / NBRC 12614 / NCIMB 9131 / NCTC 9757 / MK).